The sequence spans 185 residues: Translation initiation factor IF-3 (185 aa).

The protein belongs to the IF-3 family. In terms of assembly, monomer.

It is found in the cytoplasm. IF-3 binds to the 30S ribosomal subunit and shifts the equilibrium between 70S ribosomes and their 50S and 30S subunits in favor of the free subunits, thus enhancing the availability of 30S subunits on which protein synthesis initiation begins. The protein is Translation initiation factor IF-3 of Rickettsia felis (strain ATCC VR-1525 / URRWXCal2) (Rickettsia azadi).